The following is a 219-amino-acid chain: Charged multivesicular body protein 5 (219 aa).

A compositionally biased stretch (basic residues) spans 1–10; sequence MNRLFGKAKP. The interval 1–21 is disordered; sequence MNRLFGKAKPKAPPPSLTDCI. Lysine 7 carries (Microbial infection) N6-stearoyl lysine lipidation. The stretch at 26 to 179 forms a coiled coil; that stretch reads SRAESIDKKI…LGDELLADED (154 aa). A Phosphoserine modification is found at serine 86. The tract at residues 121-158 is interaction with VTA1; it reads KQVKIDQIEDLQDQLEDMMEDANEIQEALSRSYGTPEL. Residues 188–219 form a disordered region; that stretch reads SAPAIPEGVPTDTKNKDGVLVDEFGLPQIPAS.

The protein belongs to the SNF7 family. As to quaternary structure, probable peripherally associated component of the endosomal sorting required for transport complex III (ESCRT-III). ESCRT-III components are thought to multimerize to form a flat lattice on the perimeter membrane of the endosome. Several assembly forms of ESCRT-III may exist that interact and act sequentially. Interacts with VTA1; the interaction involves soluble CHMP5. Interacts with CHMP2A. Interacts with NOD2. Interacts with BROX. (Microbial infection) Stearoylated By S.flexneri N-epsilon-fatty acyltransferase IcsB, promoting S.flexneri evasion of autophagy. Post-translationally, ISGylated. Isgylation inhibits its interaction with VTA1.

It is found in the cytoplasm. The protein localises to the cytosol. Its subcellular location is the endosome membrane. The protein resides in the midbody. Its function is as follows. Probable peripherally associated component of the endosomal sorting required for transport complex III (ESCRT-III) which is involved in multivesicular bodies (MVBs) formation and sorting of endosomal cargo proteins into MVBs. MVBs contain intraluminal vesicles (ILVs) that are generated by invagination and scission from the limiting membrane of the endosome and mostly are delivered to lysosomes enabling degradation of membrane proteins, such as stimulated growth factor receptors, lysosomal enzymes and lipids. The MVB pathway appears to require the sequential function of ESCRT-O, -I,-II and -III complexes. ESCRT-III proteins mostly dissociate from the invaginating membrane before the ILV is released. The ESCRT machinery also functions in topologically equivalent membrane fission events, such as the terminal stages of cytokinesis and the budding of enveloped viruses (HIV-1 and other lentiviruses). ESCRT-III proteins are believed to mediate the necessary vesicle extrusion and/or membrane fission activities, possibly in conjunction with the AAA ATPase VPS4. Involved in HIV-1 p6- and p9-dependent virus release. In Homo sapiens (Human), this protein is Charged multivesicular body protein 5 (CHMP5).